The primary structure comprises 289 residues: MTGPRVRTVTAAALRAQPLPAPGGDKEQRGRVLIVGGSARVPGAVMLAGEAALRAGAGKLQLATAASVAPGMALAMPEALVLGLGENGQGEIVRGHRALDAAMSACDAAVIGPGMASTNTTAALVKRAIDQAVCTLVLDAGALSPRLRAPLGRPFVLTPHAGEMAALAGDDKAAVEAAPADYALAFAKKMRSVVIVKGADSFVAGPDGALWVHRGGVPGLGTSGSGDTLAGLIAGFAARGCDALTAALWGVFVHATAGKQLAKRIGTVGFLAREIPPEVPGILDRLPRG.

The 278-residue stretch at Val-9 to Leu-286 folds into the YjeF C-terminal domain. 2 residues coordinate (6S)-NADPHX: Ala-44 and His-160. Residues Lys-197–Ser-201 and Gly-226 each bind AMP. A (6S)-NADPHX-binding site is contributed by Asp-227.

The protein belongs to the NnrD/CARKD family. Homotetramer. It depends on Mg(2+) as a cofactor.

The enzyme catalyses (6S)-NADHX + ADP = AMP + phosphate + NADH + H(+). It catalyses the reaction (6S)-NADPHX + ADP = AMP + phosphate + NADPH + H(+). Catalyzes the dehydration of the S-form of NAD(P)HX at the expense of ADP, which is converted to AMP. Together with NAD(P)HX epimerase, which catalyzes the epimerization of the S- and R-forms, the enzyme allows the repair of both epimers of NAD(P)HX, a damaged form of NAD(P)H that is a result of enzymatic or heat-dependent hydration. This chain is ADP-dependent (S)-NAD(P)H-hydrate dehydratase, found in Xanthomonas campestris pv. campestris (strain ATCC 33913 / DSM 3586 / NCPPB 528 / LMG 568 / P 25).